A 207-amino-acid polypeptide reads, in one-letter code: Dephospho-CoA kinase (207 aa).

A DPCK domain is found at 5–207 (IVGLTGGIAS…AALQTHRIEN (203 aa)). An ATP-binding site is contributed by 13 to 18 (ASGKSA).

It belongs to the CoaE family.

The protein localises to the cytoplasm. It catalyses the reaction 3'-dephospho-CoA + ATP = ADP + CoA + H(+). It participates in cofactor biosynthesis; coenzyme A biosynthesis; CoA from (R)-pantothenate: step 5/5. In terms of biological role, catalyzes the phosphorylation of the 3'-hydroxyl group of dephosphocoenzyme A to form coenzyme A. This chain is Dephospho-CoA kinase, found in Xanthomonas campestris pv. campestris (strain ATCC 33913 / DSM 3586 / NCPPB 528 / LMG 568 / P 25).